Consider the following 376-residue polypeptide: Spermidine/putrescine import ATP-binding protein PotA (376 aa).

Residues 6 to 236 (INIVNVNKSF…PADTFVADFL (231 aa)) enclose the ABC transporter domain. Position 38-45 (38-45 (GPSGCGKT)) interacts with ATP.

It belongs to the ABC transporter superfamily. Spermidine/putrescine importer (TC 3.A.1.11.1) family. In terms of assembly, the complex is composed of two ATP-binding proteins (PotA), two transmembrane proteins (PotB and PotC) and a solute-binding protein (PotD).

The protein localises to the cell inner membrane. It catalyses the reaction ATP + H2O + polyamine-[polyamine-binding protein]Side 1 = ADP + phosphate + polyamineSide 2 + [polyamine-binding protein]Side 1.. Its function is as follows. Part of the ABC transporter complex PotABCD involved in spermidine/putrescine import. Responsible for energy coupling to the transport system. The protein is Spermidine/putrescine import ATP-binding protein PotA of Fusobacterium nucleatum subsp. nucleatum (strain ATCC 25586 / DSM 15643 / BCRC 10681 / CIP 101130 / JCM 8532 / KCTC 2640 / LMG 13131 / VPI 4355).